Reading from the N-terminus, the 276-residue chain is Secreted RxLR effector protein 85 (276 aa).

An N-terminal signal peptide occupies residues 1 to 27; it reads MRYCAFRLGLFFIGYSCCVLLSTPTLA. The RxLR signature appears at 110-113; that stretch reads RQLR.

This sequence belongs to the RxLR effector family.

Its subcellular location is the secreted. It localises to the host cell membrane. In terms of biological role, secreted effector that partially suppresses the host cell death induced by cell death-inducing proteins. In Plasmopara viticola (Downy mildew of grapevine), this protein is Secreted RxLR effector protein 85.